Consider the following 97-residue polypeptide: MKRICSIYKSPRKNEMYLYVLKADGLERVPEGLLPFFGTPVHAFDLVLSPERKLAREDIAKVLENLDSQGYHLQMPPPDDDYIEHLPEELLRRNDPA.

One can recognise a YcgL domain in the interval 3–87; the sequence is RICSIYKSPR…PDDDYIEHLP (85 aa).

The sequence is that of YcgL domain-containing protein PSEEN4034 from Pseudomonas entomophila (strain L48).